The primary structure comprises 428 residues: AA14 family lytic polysaccharide monooxygenase A (428 aa).

The first 21 residues, 1–21 (MLRSLPASLALVAAFASKASA), serve as a signal peptide directing secretion. N-linked (GlcNAc...) asparagine glycans are attached at residues Asn34 and Asn52. Disulfide bonds link Cys88–Cys112, Cys131–Cys158, Cys174–Cys179, Cys181–Cys203, and Cys223–Cys239. N-linked (GlcNAc...) asparagine glycosylation occurs at Asn155. Disordered stretches follow at residues 216–239 (KPAV…PGNC) and 292–428 (SSGT…HNAH). Residues 223 to 232 (CGADPDHGKP) are compositionally biased toward basic and acidic residues. Asn238 carries N-linked (GlcNAc...) asparagine glycosylation. The span at 292 to 379 (SSGTGSSPTS…SVATEASSSP (88 aa)) shows a compositional bias: low complexity. A compositionally biased stretch (polar residues) spans 380–402 (IASTTVDEAVVSSSTVGSINPTR). Residues 414-428 (QKKKRKHARHLHNAH) are compositionally biased toward basic residues.

Cu(2+) is required as a cofactor.

The protein localises to the secreted. Lytic polysaccharide monooxygenase (LPMO) showing oxidase and peroxidase activities that are common for LPMOs. Catalysis by LPMOs requires the reduction of the active-site copper from Cu(II) to Cu(I) by a reducing agent and H(2)O(2) or O(2) as a cosubstrate. Shows no activity on cellulose-associated xylan or any other tested polysaccharide substrate, meaning that the substrate rremains unknown. In Trametes coccinea (strain BRFM310) (Pycnoporus coccineus), this protein is AA14 family lytic polysaccharide monooxygenase A.